The chain runs to 492 residues: Serine carboxypeptidase-like 31 (492 aa).

The first 30 residues, Met-1–Cys-30, serve as a signal peptide directing secretion. Intrachain disulfides connect Cys-105/Cys-376, Cys-270/Cys-283, and Cys-307/Cys-344. Asn-156 carries N-linked (GlcNAc...) asparagine glycosylation. Ser-198 is an active-site residue. N-linked (GlcNAc...) asparagine glycans are attached at residues Asn-221 and Asn-271. Residues Asn-372 and Asn-383 are each glycosylated (N-linked (GlcNAc...) asparagine). Catalysis depends on residues Asp-413 and His-465.

The protein belongs to the peptidase S10 family. As to expression, expressed in roots, senescent leaves, stems, flowers and siliques.

The protein resides in the secreted. In terms of biological role, probable carboxypeptidase. The protein is Serine carboxypeptidase-like 31 (SCPL31) of Arabidopsis thaliana (Mouse-ear cress).